Consider the following 266-residue polypeptide: Protein crossbronx-like (266 aa).

The UBC core domain maps to 15–178; the sequence is KQGYHILAEY…VQEQAILSRN (164 aa). Residues 226-266 are disordered; it reads SEYLGHIDSSRQMDEEETNQLEKLHRGRIPEPQREEAEVSL. Over residues 245 to 266 the composition is skewed to basic and acidic residues; that stretch reads QLEKLHRGRIPEPQREEAEVSL.

Belongs to the ubiquitin-conjugating enzyme family. FTS subfamily.

The sequence is that of Protein crossbronx-like from Drosophila sechellia (Fruit fly).